The following is a 1099-amino-acid chain: Protein transport protein Sec24A (1099 aa).

Disordered stretches follow at residues 1-36 (MSQPGIPASGGSSTGLQAQNGAASASGSPYTNGPVQ), 65-139 (KTLN…LPGA), and 279-317 (SQPTTKNPTMSRSVGYSYPSLPPGYQNTAPPSTTGAGLP). Polar residues-rich tracts occupy residues 10-20 (GGSSTGLQAQN), 68-90 (NPVSGQSNSGGSQTVSPLSNYQG), 108-126 (SLHSGPSPQMPLPTSQNPA), 279-292 (SQPTTKNPTMSRSV), and 303-317 (YQNTAPPSTTGAGLP). Residues Cys-437, Cys-440, Cys-458, and Cys-461 each contribute to the Zn(2+) site. The tract at residues 437–461 (CRSCRTYINPFVSFLDQRRWKCNLC) is zinc finger-like. A Gelsolin-like repeat occupies 972–1044 (PQPPILQLSV…TPESARTIAF (73 aa)).

This sequence belongs to the SEC23/SEC24 family. SEC24 subfamily. As to quaternary structure, COPII is composed of at least five proteins: the Sec23/24 complex, the Sec13/31 complex and Sar1. Interacts with TMED2. Interacts (as part of the Sec23/24 complex) with SEC22B; recruits SEC22B into COPII-coated vesicles for its transport from the endoplasmic reticulum to the Golgi. Interacts with STING1; promoting STING1 translocation to COPII vesicles in a STEEP1-dependent manner. Interacts with TMEM39A. Interacts with SACM1L; this interaction is reduced in the absence of TMEM39A. Interacts with kinase FAM20C; transport of FAM20C from the endoplasmic reticulum to the Golgi is likely to be mediated by COPII vesicles.

It is found in the cytoplasmic vesicle. It localises to the COPII-coated vesicle membrane. The protein localises to the endoplasmic reticulum membrane. Its subcellular location is the cytoplasm. The protein resides in the cytosol. In terms of biological role, component of the coat protein complex II (COPII) which promotes the formation of transport vesicles from the endoplasmic reticulum (ER). The coat has two main functions, the physical deformation of the endoplasmic reticulum membrane into vesicles and the selection of cargo molecules for their transport to the Golgi complex. Plays a central role in cargo selection within the COPII complex and together with SEC24B may have a different specificity compared to SEC24C and SEC24D. May package preferentially cargos with cytoplasmic DxE or LxxLE motifs and may also recognize conformational epitopes. In Bos taurus (Bovine), this protein is Protein transport protein Sec24A.